The primary structure comprises 945 residues: Xylanolytic transcriptional activator xlnR (945 aa).

Residues 1–23 show a composition bias toward low complexity; sequence MSTPSIPQFTSSFSPFSSGSHST. Disordered regions lie at residues 1 to 32 and 53 to 118; these read MSTPSIPQFTSSFSPFSSGSHSTGMAPSQTVG and AAGT…APVR. Basic and acidic residues predominate over residues 73 to 84; the sequence is HTKDQPPFDNEK. Positions 125 to 151 form a DNA-binding region, zn(2)-C6 fungal-type; the sequence is CDQCNQLRTKCDGQHPCAHCIEFGLTC. Disordered regions lie at residues 172-210 and 559-601; these read AAAATQGSNGHSGQANASLMGERTSEDSRPGQDVNGTYD and PPNV…INVT. Positions 176 to 188 are enriched in polar residues; it reads TQGSNGHSGQANA. Basic and acidic residues predominate over residues 565–581; that stretch reads ARQDGERDGDGEADKRH.

The protein belongs to the xlnR/xlr1 family.

It is found in the nucleus. Its function is as follows. Transcriptional activator of the xylanolytic system. Involved in the regulation of extracellular cellulolytic and xylanolytic genes and in the regulation of the intracellular activities of D-xylose catabolic genes in the pentose catabolic pathway (PCP) in response to the presence of D-xylose. Binds to the DNA sequence 5'-GGNTAAA-3'. This chain is Xylanolytic transcriptional activator xlnR (xlnR), found in Aspergillus niger.